The sequence spans 452 residues: Aspartyl/glutamyl-tRNA(Asn/Gln) amidotransferase subunit B (452 aa).

The protein belongs to the GatB/GatE family. GatB subfamily. Heterotrimer of A, B and C subunits.

The catalysed reaction is L-glutamyl-tRNA(Gln) + L-glutamine + ATP + H2O = L-glutaminyl-tRNA(Gln) + L-glutamate + ADP + phosphate + H(+). It carries out the reaction L-aspartyl-tRNA(Asn) + L-glutamine + ATP + H2O = L-asparaginyl-tRNA(Asn) + L-glutamate + ADP + phosphate + 2 H(+). Its function is as follows. Allows the formation of correctly charged Asn-tRNA(Asn) or Gln-tRNA(Gln) through the transamidation of misacylated Asp-tRNA(Asn) or Glu-tRNA(Gln) in organisms which lack either or both of asparaginyl-tRNA or glutaminyl-tRNA synthetases. The reaction takes place in the presence of glutamine and ATP through an activated phospho-Asp-tRNA(Asn) or phospho-Glu-tRNA(Gln). This chain is Aspartyl/glutamyl-tRNA(Asn/Gln) amidotransferase subunit B, found in Methanosphaera stadtmanae (strain ATCC 43021 / DSM 3091 / JCM 11832 / MCB-3).